We begin with the raw amino-acid sequence, 920 residues long: 3-hydroxy-3-methylglutaryl-coenzyme A reductase (920 aa).

A helical membrane pass occupies residues 12 to 32; sequence FCASHPWEVIVALLTITACML. Asn-37 is a glycosylation site (N-linked (GlcNAc...) asparagine). Residues 62 to 85 form a disordered region; the sequence is GAGSGASGTIPPSSMGGSATSSRH. Residues 71–82 are compositionally biased toward polar residues; that stretch reads IPPSSMGGSATS. The SSD domain occupies 106–263; the sequence is DVILMTIVRC…MTFYPACLSL (158 aa). 5 helical membrane-spanning segments follow: residues 107–129, 136–156, 170–190, 208–228, and 237–257; these read VILMTIVRCTAVLYCYYQFCSLH, VLGIAGLFTVFSSFIFTTAII, LFFLLLVIDLSNSGRLAQLAL, LLGPAISLDTIVEVLLVGVGT, and VLCMFAVLSVLVNYVVFMTFY. Residues Asn-342 and Asn-346 are each glycosylated (N-linked (GlcNAc...) asparagine). A helical transmembrane segment spans residues 364-384; it reads SADHIVISIVLIALVVKFICF. Residues 385 to 498 form a linker region; it reads DNRDPLPDQL…EEIVSIVHAG (114 aa). Asn-443 and Asn-475 each carry an N-linked (GlcNAc...) asparagine glycan. The catalytic stretch occupies residues 499–829; the sequence is GTHCPLHKIE…TCTMPSLEVG (331 aa). Catalysis depends on charge relay system residues Glu-586, Lys-717, and Asp-793. 2 N-linked (GlcNAc...) asparagine glycosylation sites follow: Asn-797 and Asn-802. Catalysis depends on His-892, which acts as the Proton donor. 2 N-linked (GlcNAc...) asparagine glycosylation sites follow: Asn-896 and Asn-910.

Belongs to the HMG-CoA reductase family. In terms of tissue distribution, highly expressed in embryonic gonadal mesoderm, where expression is initially broad, and then becomes restricted to a segmental pattern at stage 11. Expression is then further restricted to a cluster of cells in each of parasegments 10, 11 and 12, corresponding to the developing gonadal mesoderm. Not expressed in pole cells.

The protein localises to the endoplasmic reticulum membrane. The catalysed reaction is (R)-mevalonate + 2 NADP(+) + CoA = (3S)-3-hydroxy-3-methylglutaryl-CoA + 2 NADPH + 2 H(+). The protein operates within metabolic intermediate biosynthesis; (R)-mevalonate biosynthesis; (R)-mevalonate from acetyl-CoA: step 3/3. With respect to regulation, the activity of HMG-CoA-reductase is suppressed by exogenous mevalonate. Functionally, synthesis of mevalonate for the production of non-sterol isoprenoids, which are essential for growth differentiation. Provides spatial information during embryogenesis to guide migrating primordial germ cells (the pole cells) from the ectoderm to the mesoderm. Also required for association of the pole cells with the gonadal mesoderm. The sequence is that of 3-hydroxy-3-methylglutaryl-coenzyme A reductase (Hmgcr) from Drosophila melanogaster (Fruit fly).